A 302-amino-acid polypeptide reads, in one-letter code: Mitochondrial glycine transporter (302 aa).

3 Solcar repeats span residues 22 to 112, 119 to 203, and 213 to 297; these read HPVF…LKHH, PKPL…AKKL, and FSPV…MMEK. The next 6 membrane-spanning stretches (helical) occupy residues 28 to 53, 87 to 113, 125 to 150, 178 to 201, 217 to 243, and 272 to 290; these read FVCG…TRLQ, GVSP…KHHF, VMLG…TRYE, GLTA…TRAK, LNFG…KTHI, and GGLP…AWTV.

This sequence belongs to the mitochondrial carrier (TC 2.A.29) family. SLC25A38 subfamily.

The protein localises to the mitochondrion inner membrane. It carries out the reaction glycine(in) = glycine(out). In terms of biological role, mitochondrial glycine transporter that imports glycine into the mitochondrial matrix. Plays an important role in providing glycine for the first enzymatic step in heme biosynthesis, the condensation of glycine with succinyl-CoA to produce 5-aminolevulinate (ALA) in the mitochondrial matrix. Required during erythropoiesis. May play a role as pro-apoptotic protein that induces caspase-dependent apoptosis. The protein is Mitochondrial glycine transporter of Xenopus tropicalis (Western clawed frog).